Here is a 70-residue protein sequence, read N- to C-terminus: Guanine nucleotide-binding protein subunit gamma-1 (70 aa).

Cysteine 67 is modified (cysteine methyl ester). Cysteine 67 is lipidated: S-geranylgeranyl cysteine. Positions 68–70 (TVL) are cleaved as a propeptide — removed in mature form.

This sequence belongs to the G protein gamma family. G proteins are composed of 3 units, alpha, beta and gamma. Predominantly expressed in the central nervous system.

The protein resides in the cell membrane. Its function is as follows. Guanine nucleotide-binding proteins (G proteins) are involved as a modulator or transducer in various transmembrane signaling systems. The beta and gamma chains are required for the GTPase activity, for replacement of GDP by GTP, and for G protein-effector interaction. The chain is Guanine nucleotide-binding protein subunit gamma-1 (Ggamma1) from Drosophila melanogaster (Fruit fly).